The chain runs to 507 residues: Cytochrome P450 52A7 (507 aa).

A helical membrane pass occupies residues 6–26; that stretch reads LHYWYYVLPAFIIFHWIVSAI. Position 456 (cysteine 456) interacts with heme.

Belongs to the cytochrome P450 family. Requires heme as cofactor.

It is found in the membrane. Functionally, together with an NADPH cytochrome P450 the enzyme system catalyzes the terminal hydroxylation as the first step in the assimilation of alkanes and fatty acids. Preferentially hydroxylates lauric acid. The protein is Cytochrome P450 52A7 (CYP52A7) of Candida tropicalis (Yeast).